Here is a 318-residue protein sequence, read N- to C-terminus: Deoxymugineic acid synthase 1 (318 aa).

Asp48 provides a ligand contact to NADP(+). Residue Tyr53 is the Proton donor of the active site. Residue His116 participates in substrate binding. Residues 162-163 (CN), Gln184, 262-270 (FDEARMREN), and 277-285 (ELTEEERQR) each bind NADP(+).

This sequence belongs to the aldo/keto reductase family. In terms of tissue distribution, confined to cells participating in long distance transport (e.g. in the parts of pericycle cells adjacent to the protoxylem and metaxylem) in roots and to vascular bundles in shoots.

The enzyme catalyses 2'-deoxymugineate + NAD(+) = 3''-deamino-3''-oxonicotianamine + NADH + H(+). The catalysed reaction is 2'-deoxymugineate + NADP(+) = 3''-deamino-3''-oxonicotianamine + NADPH + H(+). It functions in the pathway siderophore biosynthesis. Its function is as follows. Catalyzes the reduction of a 3''-keto intermediate during the biosynthesis of 2'-deoxymugineic acid (DMA) from L-Met. Involved in the formation of phytosiderophores (MAs) belonging to the mugineic acid family and required to acquire iron. The protein is Deoxymugineic acid synthase 1 of Oryza sativa subsp. japonica (Rice).